The chain runs to 126 residues: Acidic phospholipase A2 2 (126 aa).

A propeptide spanning residues 1–7 (SNRPMPL) is cleaved from the precursor. 7 disulfides stabilise this stretch: C18–C78, C33–C125, C35–C51, C50–C106, C57–C99, C67–C92, and C85–C97. Ca(2+) is bound by residues Y34, G36, and G38. Residue H54 is part of the active site. Position 55 (D55) interacts with Ca(2+). Residue D100 is part of the active site.

This sequence belongs to the phospholipase A2 family. Group I subfamily. D49 sub-subfamily. As to quaternary structure, heterodimer formed between two homologous isoforms: isoform 1 and isoform 2. Requires Ca(2+) as cofactor. In terms of tissue distribution, expressed by the venom gland.

The protein localises to the secreted. It catalyses the reaction a 1,2-diacyl-sn-glycero-3-phosphocholine + H2O = a 1-acyl-sn-glycero-3-phosphocholine + a fatty acid + H(+). Its function is as follows. PLA2 catalyzes the calcium-dependent hydrolysis of the 2-acyl groups in 3-sn-phosphoglycerides. This Naja sagittifera (Andaman cobra) protein is Acidic phospholipase A2 2.